The following is a 742-amino-acid chain: Enhancer of polycomb-like protein 1 (742 aa).

The segment covering 1–27 (MPTPSAQLDQGIISSNGGTSGVSASST) has biased composition (polar residues). Disordered regions lie at residues 1–28 (MPTPSAQLDQGIISSNGGTSGVSASSTR), 416–446 (RQQSQLQKLDQQQRQQQQQQQPQINGAQCQQ), and 718–742 (KKLVNAQRQQQQQQQEQQEQEHQQA). Residues 724–734 (QRQQQQQQQEQ) show a composition bias toward low complexity.

This sequence belongs to the enhancer of polycomb family. Component of the NuA4 histone acetyltransferase complex.

The protein resides in the nucleus. In terms of biological role, component of the NuA4 histone acetyltransferase complex which is involved in transcriptional activation of selected genes principally by acetylation of nucleosomal histone H4 and H2A. The NuA4 complex is also involved in DNA repair. Involved in gene silencing by neighboring heterochromatin, blockage of the silencing spreading along the chromosome, and required for cell cycle progression through G2/M. This is Enhancer of polycomb-like protein 1 (EPL1) from Eremothecium gossypii (strain ATCC 10895 / CBS 109.51 / FGSC 9923 / NRRL Y-1056) (Yeast).